The following is a 188-amino-acid chain: dCTP deaminase (188 aa).

DCTP contacts are provided by residues Lys-111–Arg-116, Thr-135–Glu-137, Gln-156, Tyr-170, and Gln-180. Glu-137 acts as the Proton donor/acceptor in catalysis.

It belongs to the dCTP deaminase family. As to quaternary structure, homotrimer.

It carries out the reaction dCTP + H2O + H(+) = dUTP + NH4(+). The protein operates within pyrimidine metabolism; dUMP biosynthesis; dUMP from dCTP (dUTP route): step 1/2. Functionally, catalyzes the deamination of dCTP to dUTP. The sequence is that of dCTP deaminase from Janthinobacterium sp. (strain Marseille) (Minibacterium massiliensis).